The chain runs to 430 residues: Adenylosuccinate synthetase (430 aa).

GTP-binding positions include 13 to 19 (GDEGKGK) and 41 to 43 (GHT). The Proton acceptor role is filled by aspartate 14. 2 residues coordinate Mg(2+): aspartate 14 and glycine 41. IMP contacts are provided by residues 14–17 (DEGK), 39–42 (NAGH), threonine 130, arginine 144, glutamine 225, threonine 240, and arginine 304. Histidine 42 serves as the catalytic Proton donor. 300 to 306 (STTGRKR) contributes to the substrate binding site. Residues arginine 306, 332–334 (KLD), and 414–416 (STG) each bind GTP.

It belongs to the adenylosuccinate synthetase family. Homodimer. It depends on Mg(2+) as a cofactor.

The protein resides in the cytoplasm. The enzyme catalyses IMP + L-aspartate + GTP = N(6)-(1,2-dicarboxyethyl)-AMP + GDP + phosphate + 2 H(+). It functions in the pathway purine metabolism; AMP biosynthesis via de novo pathway; AMP from IMP: step 1/2. In terms of biological role, plays an important role in the de novo pathway of purine nucleotide biosynthesis. Catalyzes the first committed step in the biosynthesis of AMP from IMP. The chain is Adenylosuccinate synthetase from Buchnera aphidicola subsp. Schizaphis graminum (strain Sg).